A 247-amino-acid polypeptide reads, in one-letter code: tRNA pseudouridine synthase A (247 aa).

Asp-52 acts as the Nucleophile in catalysis. Tyr-113 contacts substrate.

Belongs to the tRNA pseudouridine synthase TruA family. Homodimer.

It catalyses the reaction uridine(38/39/40) in tRNA = pseudouridine(38/39/40) in tRNA. Its function is as follows. Formation of pseudouridine at positions 38, 39 and 40 in the anticodon stem and loop of transfer RNAs. This is tRNA pseudouridine synthase A from Bartonella bacilliformis (strain ATCC 35685 / KC583 / Herrer 020/F12,63).